The sequence spans 915 residues: MVDQRRSALGFVLLLLCLVLFFDCVVVGQTQSRFSEKLILLNLRSSLGLRGTDWPIKGDPCVDWRGIQCENGSIIGINISGFRRTRIGKLNPQFSVDPLRNLTRLSYFNASGLALPGTIPEWFGVSLLALEVLDLSSCSVNGVVPFTLGNLTSLRTLNLSQNSLTSLVPSSLGQLLNLSQLDLSRNSFTGVLPQSFSSLKNLLTLDVSSNYLTGPIPPGLGALSKLIHLNFSSNSFSSPIPSELGDLVNLVDFDLSINSLSGSVPQELRKLSKLQLMAIGDNLLSGTLPVDLFSAESQLQTLVLRENGFSGSLPDVCWSLPKLRILDIAKNNFTGLLPYSSYDSDQIAEMVDISSNTFYGELTPILRRFRIMDLSGNYFEGKLPDYVTGENVSVTSNCLRNERRQKPSAICAAFYKSRGLDFDDFGRPNLTQPTSKNASSGISRRTVIILAAVGGGVAFILLFVILPIILVLCMRHRRRAAQRGNNDRPKPAGEASQQPPKGAQTFDLSRLGNAFSYEQLLQATEEFNDANLIKRGHSGNLFRGFLENGIPVVIKKIDVREGKSEGYISELELFSKAGHQRLVPFLGHCLENESQKFLVYKFMRHGDLASSLFRKSENEGDGLKSLDWITRLKIALGAAEGLSYLHHECSPPLVHRDVQASSILLDDKFEVRLGSLSEAYAQGDAYQSRISRLLRLPQSSEPSSSGVTNAICSYDVYCFGKVLLELVTGKLGISSPDNALAKEYMEEALPYISTNEKELVTKILDPSLMVDEDLLEEVWAMAIIAKSCLNPKPTRRPLMRHIVNALENPLKVVREDTNSGSGSSRLRTNSSRGSWNAAIFGSWRQSASDVTAVQAGATTSGGGGGGGGNGLRNSGSQGSSGRNNNNNGNSSSSRRRQSSEIVPEPAAYGVVEDNL.

Residues 1–28 form the signal peptide; the sequence is MVDQRRSALGFVLLLLCLVLFFDCVVVG. At 29-451 the chain is on the extracellular side; it reads QTQSRFSEKL…ISRRTVIILA (423 aa). N-linked (GlcNAc...) asparagine glycans are attached at residues Asn71, Asn78, Asn101, Asn109, Asn150, Asn158, and Asn177. 11 LRR repeats span residues 102–125, 127–150, 151–174, 176–198, 199–223, 225–247, 248–271, 272–295, 297–320, 321–344, and 366–390; these read LTRLSYFNASGLALPGTIPEWFGV, LLALEVLDLSSCSVNGVVPFTLGN, LTSLRTLNLSQNSLTSLVPSSLGQ, LNLSQLDLSRNSFTGVLPQSFSS, LKNLLTLDVSSNYLTGPIPPGLGAL, KLIHLNFSSNSFSSPIPSELGDL, VNLVDFDLSINSLSGSVPQELRKL, SKLQLMAIGDNLLSGTLPVDLFSA, SQLQTLVLRENGFSGSLPDVCWSL, PKLRILDIAKNNFTGLLPYSSYDS, and LRRFRIMDLSGNYFEGKLPDYVTGE. Asn230 carries N-linked (GlcNAc...) asparagine glycosylation. Asn332 carries N-linked (GlcNAc...) asparagine glycosylation. Asn391, Asn429, and Asn437 each carry an N-linked (GlcNAc...) asparagine glycan. A helical membrane pass occupies residues 452 to 472; sequence AVGGGVAFILLFVILPIILVL. Topologically, residues 473–915 are cytoplasmic; it reads CMRHRRRAAQ…AAYGVVEDNL (443 aa). The tract at residues 482–503 is disordered; that stretch reads QRGNNDRPKPAGEASQQPPKGA. One can recognise a Protein kinase domain in the interval 527–811; that stretch reads FNDANLIKRG…IVNALENPLK (285 aa). ATP contacts are provided by residues 533 to 541 and Lys555; that span reads IKRGHSGNL. Catalysis depends on Asp657, which acts as the Proton acceptor. A disordered region spans residues 851-915; it reads TAVQAGATTS…AAYGVVEDNL (65 aa). Gly residues predominate over residues 859–870; sequence TSGGGGGGGGNG. The segment covering 871 to 892 has biased composition (low complexity); the sequence is LRNSGSQGSSGRNNNNNGNSSS.

The protein belongs to the protein kinase superfamily. Ser/Thr protein kinase family.

The protein localises to the membrane. It catalyses the reaction L-seryl-[protein] + ATP = O-phospho-L-seryl-[protein] + ADP + H(+). The catalysed reaction is L-threonyl-[protein] + ATP = O-phospho-L-threonyl-[protein] + ADP + H(+). The chain is Probable LRR receptor-like serine/threonine-protein kinase At2g16250 from Arabidopsis thaliana (Mouse-ear cress).